Consider the following 488-residue polypeptide: Bifunctional protein HldE (488 aa).

The ribokinase stretch occupies residues 1-330 (MDRKSIESIF…NAVALAHSDS (330 aa)). An ATP-binding site is contributed by 205 to 208 (NRRE). Aspartate 275 is an active-site residue. The segment at 356-488 (FTNGCFDLLH…IIERVLERYS (133 aa)) is cytidylyltransferase.

In the N-terminal section; belongs to the carbohydrate kinase PfkB family. This sequence in the C-terminal section; belongs to the cytidylyltransferase family. Homodimer.

The catalysed reaction is D-glycero-beta-D-manno-heptose 7-phosphate + ATP = D-glycero-beta-D-manno-heptose 1,7-bisphosphate + ADP + H(+). It carries out the reaction D-glycero-beta-D-manno-heptose 1-phosphate + ATP + H(+) = ADP-D-glycero-beta-D-manno-heptose + diphosphate. It participates in nucleotide-sugar biosynthesis; ADP-L-glycero-beta-D-manno-heptose biosynthesis; ADP-L-glycero-beta-D-manno-heptose from D-glycero-beta-D-manno-heptose 7-phosphate: step 1/4. It functions in the pathway nucleotide-sugar biosynthesis; ADP-L-glycero-beta-D-manno-heptose biosynthesis; ADP-L-glycero-beta-D-manno-heptose from D-glycero-beta-D-manno-heptose 7-phosphate: step 3/4. In terms of biological role, catalyzes the phosphorylation of D-glycero-D-manno-heptose 7-phosphate at the C-1 position to selectively form D-glycero-beta-D-manno-heptose-1,7-bisphosphate. Its function is as follows. Catalyzes the ADP transfer from ATP to D-glycero-beta-D-manno-heptose 1-phosphate, yielding ADP-D-glycero-beta-D-manno-heptose. In Pelobacter propionicus (strain DSM 2379 / NBRC 103807 / OttBd1), this protein is Bifunctional protein HldE.